We begin with the raw amino-acid sequence, 177 residues long: MSRVAKAPVVVPAGVDVKINGQVITIKGKNGELTRTLNDAVEVKHADNALTFGPRDGYVDGWAQAGTARALLNSMVIGVTEGFTKKLQLVGVGYRAAVKGNVVNLSLGFSHPVDHQLPAGITAECPTQTEIVLKGADKQVIGQVAADLRAYRRPEPYKGKGVRYADEVVRTKEAKKK.

Belongs to the universal ribosomal protein uL6 family. In terms of assembly, part of the 50S ribosomal subunit.

In terms of biological role, this protein binds to the 23S rRNA, and is important in its secondary structure. It is located near the subunit interface in the base of the L7/L12 stalk, and near the tRNA binding site of the peptidyltransferase center. The sequence is that of Large ribosomal subunit protein uL6 from Citrobacter koseri (strain ATCC BAA-895 / CDC 4225-83 / SGSC4696).